The primary structure comprises 252 residues: Probable transcriptional regulatory protein Kole_1935 (252 aa).

This sequence belongs to the TACO1 family.

It localises to the cytoplasm. The protein is Probable transcriptional regulatory protein Kole_1935 of Kosmotoga olearia (strain ATCC BAA-1733 / DSM 21960 / TBF 19.5.1).